The primary structure comprises 72 residues: Sperm protein associated with the nucleus on the X chromosome N1 (72 aa).

Positions 1–44 are disordered; that stretch reads MEQPTSSINGEKRKSPCESNNENDEMQETPNRDLAPEPSLKKMK.

It belongs to the SPAN-X family.

The sequence is that of Sperm protein associated with the nucleus on the X chromosome N1 (SPANXN1) from Homo sapiens (Human).